The primary structure comprises 686 residues: Zinc finger protein 7 (686 aa).

One can recognise a KRAB domain in the interval 4–76 (VTFGDVAVHF…DLQGAEGTEA (73 aa)). Glycyl lysine isopeptide (Lys-Gly) (interchain with G-Cter in SUMO2) cross-links involve residues lysine 81 and lysine 101. A phosphoserine mark is found at serine 126 and serine 138. C2H2-type zinc fingers lie at residues 223 to 245 (SRCQ…NNCH), 250 to 272 (YECA…QRIH), 278 to 300 (FKCT…QRIH), 306 to 328 (YRCE…QRIH), 334 to 356 (YGCR…QRTH), and 362 to 384 (YPCK…QRMH). Glycyl lysine isopeptide (Lys-Gly) (interchain with G-Cter in SUMO2) cross-links involve residues lysine 279 and lysine 292. Residue lysine 393 forms a Glycyl lysine isopeptide (Lys-Gly) (interchain with G-Cter in SUMO2) linkage. 9 consecutive C2H2-type zinc fingers follow at residues 413–435 (FKCD…QLIH), 441–463 (YKCN…QRTH), 469–491 (FKCD…QRIH), 497–519 (YVCN…QRIH), 525–547 (YECL…QRVH), 553–575 (YKCN…QIIH), 581–603 (YECS…QRIH), 634–656 (HQCE…QRIH), and 662–684 (YKCN…QKIH).

This sequence belongs to the krueppel C2H2-type zinc-finger protein family.

It is found in the nucleus. Its function is as follows. May be involved in transcriptional regulation. The protein is Zinc finger protein 7 (ZNF7) of Pongo abelii (Sumatran orangutan).